Consider the following 406-residue polypeptide: uncharacterized protein (406 aa).

The N-myristoyl glycine; by host moiety is linked to residue Gly-2. Positions 291 to 406 (QLESTTEVKP…FQYNKPTYDI (116 aa)) are disordered. Residues 296 to 310 (TEVKPESTTEVKPES) show a composition bias toward basic and acidic residues. The segment covering 311 to 323 (TSEVQPESTTEFQ) has biased composition (polar residues). 3 stretches are compositionally biased toward low complexity: residues 324-333 (PESTTVVEPE), 341-351 (ESTTEFQPEST), and 359-369 (TTEPQVESTTE). Over residues 370 to 406 (FQPESSTEPQVESTVEVQAESMNESSYFQYNKPTYDI) the composition is skewed to polar residues.

This is an uncharacterized protein from Acanthamoeba polyphaga (Amoeba).